A 243-amino-acid polypeptide reads, in one-letter code: Peptide deformylase, mitochondrial (243 aa).

The N-terminal 39 residues, 1–39 (MARLWGALSLWPLWAAVPWGGAAAVGVRACSSTAAPDGV), are a transit peptide targeting the mitochondrion. Substrate contacts are provided by Gly-71, Pro-169, and Gly-171. Positions 165–175 (LVTFPEGCESV) are hydrophobic dimerization interface. The Co(2+) site is built by Cys-172 and His-214. The active site involves Glu-215. Residue His-218 coordinates Co(2+).

The protein belongs to the polypeptide deformylase family. In terms of assembly, homodimer. Requires Co(2+) as cofactor. In terms of tissue distribution, ubiquitous.

The protein resides in the mitochondrion. The enzyme catalyses N-terminal N-formyl-L-methionyl-[peptide] + H2O = N-terminal L-methionyl-[peptide] + formate. Its function is as follows. Removes the formyl group from the N-terminal Met of newly synthesized proteins. In Homo sapiens (Human), this protein is Peptide deformylase, mitochondrial.